The primary structure comprises 258 residues: Ribosomal RNA small subunit methyltransferase A (258 aa).

Residues histidine 13, leucine 15, glycine 40, glutamate 61, aspartate 85, and asparagine 106 each coordinate S-adenosyl-L-methionine.

It belongs to the class I-like SAM-binding methyltransferase superfamily. rRNA adenine N(6)-methyltransferase family. RsmA subfamily.

It is found in the cytoplasm. The enzyme catalyses adenosine(1518)/adenosine(1519) in 16S rRNA + 4 S-adenosyl-L-methionine = N(6)-dimethyladenosine(1518)/N(6)-dimethyladenosine(1519) in 16S rRNA + 4 S-adenosyl-L-homocysteine + 4 H(+). Specifically dimethylates two adjacent adenosines (A1518 and A1519) in the loop of a conserved hairpin near the 3'-end of 16S rRNA in the 30S particle. May play a critical role in biogenesis of 30S subunits. This is Ribosomal RNA small subunit methyltransferase A from Porphyromonas gingivalis (strain ATCC 33277 / DSM 20709 / CIP 103683 / JCM 12257 / NCTC 11834 / 2561).